Consider the following 296-residue polypeptide: Small ribosomal subunit protein uS2m (296 aa).

The disordered stretch occupies residues 274 to 296 (QGQKEPGDQGPAHPPGADMSHSL).

Belongs to the universal ribosomal protein uS2 family. Component of the mitochondrial small ribosomal subunit (mt-SSU). Mature mammalian 55S mitochondrial ribosomes consist of a small (28S) and a large (39S) subunit. The 28S small subunit contains a 12S ribosomal RNA (12S mt-rRNA) and 30 different proteins. The 39S large subunit contains a 16S rRNA (16S mt-rRNA), a copy of mitochondrial valine transfer RNA (mt-tRNA(Val)), which plays an integral structural role, and 52 different proteins.

Its subcellular location is the mitochondrion. In terms of biological role, required for mitoribosome formation and stability, and mitochondrial translation. This is Small ribosomal subunit protein uS2m (MRPS2) from Homo sapiens (Human).